Consider the following 156-residue polypeptide: Terrestric acid biosynthesis cluster protein E (156 aa).

The protein operates within secondary metabolite biosynthesis. Part of the tra gene cluster that produces terrestric acid. The clavatol biosynthesis cluster cla and the terrestric acid cluster tra are both involved in the production of peniphenones and penilactones. The non-reducing PKS claF is responsible for the formation of clavatol from successive condensations of 3 malonyl-CoA units, presumably with a simple acetyl-CoA starter unit, and 2 methylation steps. The esterase claE probably collaborates with claF by catalyzing the hydrolysis of ACP-bound acyl intermediates to free the ACP from stalled intermediates. The clavatol oxidase claD then converts clavatol to hydroxyclavatol. Spontaneous dehydration of hydroxyclavatol leads to the accumulation of the highly active ortho-quinone methide. On the other hand, the PKS-NRPS hybrid traA is involved in the formation of crustosic acid, with the help of traB and traD. The polyketide synthase module (PKS) of traA is responsible for the synthesis of the polyketide backbone via the condensation of an acetyl-CoA starter unit with 3 malonyl-CoA units. The downstream nonribosomal peptide synthetase (NRPS) module then amidates the carboxyl end of the polyketide with L-malic acid. Because traA lacks a designated enoylreductase (ER) domain, the required activity is provided the enoyl reductase traG. Crustosic acid undergoes decarboxylation and isomerization to the terrestric acid, catalyzed by the 2-oxoglutarate-dependent dioxygenase traH. Both acids are further converted to the 2 gamma-butyrolactones (R)-5-methyltetronic acid and (S)-5-carboxylmethyltetronic acid, with involvement of the cytochrome P450 monooxygenase claJ. Spontaneous addition of the methide to these gamma-butyrolactones leads to peniphenone D and penilactone D, which undergo again stereospecific attacking by methide to give penilactones A and B. TraE seems not to be involved in the biosynthesis of peniphenones and penilactones in the conditions used to study its function. The chain is Terrestric acid biosynthesis cluster protein E from Penicillium crustosum (Blue mold fungus).